Here is a 167-residue protein sequence, read N- to C-terminus: RNA pyrophosphohydrolase (167 aa).

The region spanning Pro8–Arg158 is the Nudix hydrolase domain. Residues Gly49–Gly70 carry the Nudix box motif.

This sequence belongs to the Nudix hydrolase family. RppH subfamily. A divalent metal cation is required as a cofactor.

Accelerates the degradation of transcripts by removing pyrophosphate from the 5'-end of triphosphorylated RNA, leading to a more labile monophosphorylated state that can stimulate subsequent ribonuclease cleavage. In Gluconacetobacter diazotrophicus (strain ATCC 49037 / DSM 5601 / CCUG 37298 / CIP 103539 / LMG 7603 / PAl5), this protein is RNA pyrophosphohydrolase.